We begin with the raw amino-acid sequence, 304 residues long: Non-specific ribonucleoside hydrolase RihC (304 aa).

Residue His-233 is part of the active site.

The protein belongs to the IUNH family. RihC subfamily.

Its function is as follows. Hydrolyzes both purine and pyrimidine ribonucleosides with a broad-substrate specificity. The sequence is that of Non-specific ribonucleoside hydrolase RihC from Escherichia coli O17:K52:H18 (strain UMN026 / ExPEC).